A 418-amino-acid chain; its full sequence is Ceramide synthase LAC1 (418 aa).

Residues 1–14 show a composition bias toward polar residues; that stretch reads MSTIKPSPSNNNLK. Residues 1 to 25 form a disordered region; it reads MSTIKPSPSNNNLKVRSRPRRKSSI. Residue Ser-2 is modified to N-acetylserine. Over 2-81 the chain is Cytoplasmic; that stretch reads STIKPSPSNN…WFSFREISYR (80 aa). A compositionally biased stretch (basic residues) spans 15-24; the sequence is VRSRPRRKSS. 2 positions are modified to phosphoserine: Ser-23 and Ser-24. A helical transmembrane segment spans residues 82–102; it reads HAWIAPLMILIAVYSAYFTSG. Asn-103 is a glycosylation site (N-linked (GlcNAc...) asparagine). Residues 103-130 are Lumenal-facing; it reads NTTKTNVLHRFVAVSYQIGDTNAYGKGI. The helical transmembrane segment at 131–155 threads the bilayer; it reads NDLCFVFYYMIFFTFLREFLMDVVI. Topologically, residues 156–172 are cytoplasmic; it reads RPFAIRLHVTSKHRIKR. The 218-residue stretch at 168–385 folds into the TLC domain; it reads HRIKRIMEQM…FRVLYRILWR (218 aa). Fumonisin B1 contacts are provided by Arg-169, Arg-172, and Tyr-182. A helical transmembrane segment spans residues 173–194; that stretch reads IMEQMYAIFYTGVSGPFGIYCM. The Lumenal portion of the chain corresponds to 195-217; sequence YHSDLWFFNTKAMYRTYPDFTNP. The helical transmembrane segment at 218–240 threads the bilayer; the sequence is FLFKVFYLGQAAFWAQQACILVL. Hexacosanoate-binding residues include Tyr-224 and Trp-231. Residue Trp-231 participates in fumonisin B1 binding. Trp-231 is a binding site for hexacosanoyl-CoA. Topologically, residues 241 to 249 are cytoplasmic; the sequence is QLEKPRKDH. The chain crosses the membrane as a helical span at residues 250–268; it reads NELTFHHIVTLLLIWSSYV. His-255 contacts fumonisin B1. 15 residues coordinate hexacosanoate: His-255, Thr-259, Leu-262, Ile-263, Ser-265, Ser-266, Phe-269, Phe-271, Met-274, Gly-275, Ile-278, Tyr-279, Met-282, Asp-283, and Asp-286. Hexacosanoyl-CoA contacts are provided by His-255, Thr-259, and Leu-262. Positions 265 and 266 each coordinate hexacosanoyl-CoA. Residues 269–273 lie on the Lumenal side of the membrane; that stretch reads FHFTK. Hexacosanoyl-CoA contacts are provided by Phe-271, Met-274, Gly-275, Ile-278, Tyr-279, and Met-282. A helical membrane pass occupies residues 274–295; it reads MGLPIYITMDVSDFLLSFSKTL. Residues Asp-286, Leu-289, Lys-293, Asn-296, Tyr-297, Ala-303, Phe-304, Phe-307, and Trp-314 each coordinate fumonisin B1. 4 residues coordinate hexacosanoyl-CoA: Asp-286, Leu-289, Lys-293, and Asn-296. Residues 296–305 lie on the Cytoplasmic side of the membrane; sequence NYLDSGLAFF. The helical transmembrane segment at 306 to 334 threads the bilayer; the sequence is SFAIFVVAWIYLRHYINLKILWSVLTQFR. Residue Phe-307 coordinates hexacosanoyl-CoA. Positions 318, 343, 348, 352, 353, 356, 357, 360, 361, and 371 each coordinate hexacosanoate. Position 318 (Arg-318) interacts with hexacosanoyl-CoA. Residues 335–353 are Lumenal-facing; the sequence is TEGNYVLNFATQQYKCWIS. 6 residues coordinate hexacosanoyl-CoA: Tyr-348, Ile-352, Ser-353, Ile-356, Val-357, and Leu-360. A helical membrane pass occupies residues 354 to 382; it reads LPIVFVLIGALQLVNLYWLFLIFRVLYRI. Trp-371, Ile-375, Val-378, Ile-382, and Arg-385 together coordinate fumonisin B1. Trp-371 is a binding site for hexacosanoyl-CoA. The Cytoplasmic portion of the chain corresponds to 383-418; the sequence is LWRGILKDDRSDSESDEESDESSTTPTDSTPTKKDI. A disordered region spans residues 390-418; the sequence is DDRSDSESDEESDESSTTPTDSTPTKKDI.

This sequence belongs to the sphingosine N-acyltransferase family. In terms of assembly, component of the ceramide synthase complex composed of at least LAC1, LAG1 and LIP1. Forms a heterotetrameric complex, where one unit of the LIP1 homodimer interacts with LAC1 and the other with either LAC1 or LAG1. In terms of processing, phosphorylated; phosphorylation is induced upon disruption of sphingolipid synthesis. Phosphorylation is inhibited by exogenous addition of phytosphingosine.

The protein resides in the endoplasmic reticulum membrane. The catalysed reaction is a very long-chain fatty acyl-CoA + a sphingoid base = an N-(very-long-chain fatty acyl)-sphingoid base + CoA + H(+). It catalyses the reaction hexacosanoyl-CoA + sphinganine = N-hexacosanoylsphinganine + CoA + H(+). It carries out the reaction eicosanoyl-CoA + sphinganine = N-eicosanoylsphinganine + CoA + H(+). The enzyme catalyses a fatty acyl-CoA + sphinganine = an N-acylsphinganine + CoA + H(+). The catalysed reaction is (4R)-hydroxysphinganine + a fatty acyl-CoA = an N-acyl-(4R)-4-hydroxysphinganine + CoA + H(+). It participates in lipid metabolism; sphingolipid metabolism. With respect to regulation, as part of the ceramide synthase complex, inhibited by the sphinganine analog mycotoxin, fumonisin B1 (FB1). Activated by ACB1, as part of the ceramide synthase complex. Component of the ceramide synthase complex that catalyzes the transfer of the acyl chain from acyl-CoA to a sphingoid base, with high selectivity toward hexacosanoyl-CoA (C26:0-CoA). N-acylates sphinganine and phytosphingosine bases to form dihydroceramides and phytoceramides, respectively. Redundant with LAG1. Facilitates ER-to-Golgi transport of GPI-anchored proteins. Has a lower affinity for phytosphingosine (PHS) than dihydrosphingosine (DHS); PHS is required for the synthesis of phytoceramides and the formation of nuclear envelopes. Along with LAG1, plays a role in pheromone-induced MAP kinase-activation of mating and formation of diploid cells. May also play a role, together with LAG1, in the polarized membrane distribution of phosphatidylinositol 4,5 biphosphate required for STE5 localization to the plasma membrane. The protein is Ceramide synthase LAC1 (LAC1) of Saccharomyces cerevisiae (strain ATCC 204508 / S288c) (Baker's yeast).